Here is a 306-residue protein sequence, read N- to C-terminus: Curved DNA-binding protein (306 aa).

Residues 5 to 69 (DYYAIMGVKP…QRRAEYDQMW (65 aa)) enclose the J domain.

The protein localises to the cytoplasm. It is found in the nucleoid. In terms of biological role, DNA-binding protein that preferentially recognizes a curved DNA sequence. It is probably a functional analog of DnaJ; displays overlapping activities with DnaJ, but functions under different conditions, probably acting as a molecular chaperone in an adaptive response to environmental stresses other than heat shock. Lacks autonomous chaperone activity; binds native substrates and targets them for recognition by DnaK. Its activity is inhibited by the binding of CbpM. The protein is Curved DNA-binding protein of Shigella dysenteriae serotype 1 (strain Sd197).